Reading from the N-terminus, the 501-residue chain is Aspartyl/glutamyl-tRNA(Asn/Gln) amidotransferase subunit B (501 aa).

Residues 271-299 form a disordered region; that stretch reads VQETRHYQETDGSTSKGRPKETAEDYRYF. A compositionally biased stretch (basic and acidic residues) spans 288–299; it reads RPKETAEDYRYF.

This sequence belongs to the GatB/GatE family. GatB subfamily. In terms of assembly, heterotrimer of A, B and C subunits.

The catalysed reaction is L-glutamyl-tRNA(Gln) + L-glutamine + ATP + H2O = L-glutaminyl-tRNA(Gln) + L-glutamate + ADP + phosphate + H(+). The enzyme catalyses L-aspartyl-tRNA(Asn) + L-glutamine + ATP + H2O = L-asparaginyl-tRNA(Asn) + L-glutamate + ADP + phosphate + 2 H(+). In terms of biological role, allows the formation of correctly charged Asn-tRNA(Asn) or Gln-tRNA(Gln) through the transamidation of misacylated Asp-tRNA(Asn) or Glu-tRNA(Gln) in organisms which lack either or both of asparaginyl-tRNA or glutaminyl-tRNA synthetases. The reaction takes place in the presence of glutamine and ATP through an activated phospho-Asp-tRNA(Asn) or phospho-Glu-tRNA(Gln). This chain is Aspartyl/glutamyl-tRNA(Asn/Gln) amidotransferase subunit B, found in Corynebacterium diphtheriae (strain ATCC 700971 / NCTC 13129 / Biotype gravis).